We begin with the raw amino-acid sequence, 273 residues long: Outer surface protein A (273 aa).

Positions 1–16 (MKKYLLGIGLILALIA) are cleaved as a signal peptide. A lipid anchor (N-palmitoyl cysteine) is attached at Cys-17. A lipid anchor (S-diacylglycerol cysteine) is attached at Cys-17.

The protein belongs to the OspA lipoprotein family.

It is found in the cell outer membrane. The protein localises to the cell surface. Functionally, induces host (human and mouse) cytokine release by monocyte cell lines via TLR2 and CD14; nonlipidated protein does not stimulate host cells. The chain is Outer surface protein A from Borreliella burgdorferi (strain ATCC 35210 / DSM 4680 / CIP 102532 / B31) (Borrelia burgdorferi).